The chain runs to 359 residues: Type-1 angiotensin II receptor (359 aa).

The Extracellular segment spans residues 1–25; that stretch reads MILNSSTEDGIKRIQDDCPKAGRHS. Residue Asn4 is glycosylated (N-linked (GlcNAc...) asparagine). Gln15 and Asp17 together coordinate angiotensin II. Disulfide bonds link Cys18–Cys274 and Cys101–Cys180. A helical transmembrane segment spans residues 26–55; it reads YIFVMIPTLYSIIFVVGIFGNSLVVIVIYF. Residues 56–61 are Cytoplasmic-facing; that stretch reads YMKLKT. A helical membrane pass occupies residues 62–89; it reads VASVFLLNLALADICFLLTLPLWAVYTA. Topologically, residues 90-98 are extracellular; the sequence is MEYRWPFGN. Residues 99-125 traverse the membrane as a helical segment; that stretch reads YLCKIASASVSFNLYASVFLLTCLSID. The Cytoplasmic portion of the chain corresponds to 126–141; sequence RYLAIVHPMKSRLRRT. The chain crosses the membrane as a helical span at residues 142-165; it reads MLVAKVTCVIIWLMAGLASLPAVI. Topologically, residues 166-190 are extracellular; sequence HRNVFFIENTNITVCAFHYESQNST. Arg167 contributes to the angiotensin II binding site. Residue Asn176 is glycosylated (N-linked (GlcNAc...) asparagine). Angiotensin II is bound by residues Phe182, His183, and Tyr184. Asn188 is a glycosylation site (N-linked (GlcNAc...) asparagine). A helical transmembrane segment spans residues 191–216; sequence LPIGLGLTKNILGFMFPFLIILTSYT. Lys199 provides a ligand contact to angiotensin II. Topologically, residues 217 to 239 are cytoplasmic; sequence LIWKALKKAYEIQKNKPRNDDIF. A helical membrane pass occupies residues 240-268; the sequence is KIIMAIVLFFFFSWVPHQIFTFLDVLIQL. Residues 269–278 lie on the Extracellular side of the membrane; it reads GIIHDCKISD. The helical transmembrane segment at 279-304 threads the bilayer; that stretch reads IVDTAMPITICIAYFNNCLNPLFYGF. Topologically, residues 305 to 359 are cytoplasmic; that stretch reads LGKKFKKYFLQLLKYIPPKAKSHSTLSTKMSTLSYRPSDNVSSSAKKPVQCFEVE. Polar residues predominate over residues 337 to 349; that stretch reads LSYRPSDNVSSSA. The segment at 337–359 is disordered; the sequence is LSYRPSDNVSSSAKKPVQCFEVE. Cys355 is lipidated: S-palmitoyl cysteine.

This sequence belongs to the G-protein coupled receptor 1 family. As to quaternary structure, interacts with MAS1. Interacts with ARRB1. Interacts with FLNA (via filamin repeat 21); increases PKA-mediated phosphorylation of FLNA. C-terminal Ser or Thr residues may be phosphorylated. Expressed in liver, kidney, adrenal gland, heart and colon.

It localises to the cell membrane. In terms of biological role, receptor for angiotensin II, a vasoconstricting peptide, which acts as a key regulator of blood pressure and sodium retention by the kidney. The activated receptor in turn couples to G-alpha proteins G(q) (GNAQ, GNA11, GNA14 or GNA15) and thus activates phospholipase C and increases the cytosolic Ca(2+) concentrations, which in turn triggers cellular responses such as stimulation of protein kinase C. This chain is Type-1 angiotensin II receptor (AGTR1), found in Cavia porcellus (Guinea pig).